Here is a 401-residue protein sequence, read N- to C-terminus: Chromate transport protein (401 aa).

12 helical membrane-spanning segments follow: residues 26 to 46 (LVMYFLRLGTLGFGGPVALAG), 67 to 87 (GLALAQLAPGPLAAQLAIYLG), 93 to 113 (IVGATLVGVAFVLPSFLMVLA), 124 to 144 (LTWMQSVFYGVGAAVIGIIAI), 172 to 192 (VITESEVAWLFLAAGVLVWFW), 214 to 234 (AASGMMSTLDWPLLSQIGVFF), 237 to 257 (AGAFVFGSGLAIVPFLYGGVV), 272 to 294 (VAVAMITPGPVVITVGFIGYLVA), 299 to 321 (ACVAAAATFLPCYLFTVLPAPYF), 330 to 350 (ILAFVDGVTAAAIGAITGAVI), 356 to 376 (SIVDIPTALLALVTVALLLKF), and 379 to 399 (LSEPMIVAGAALIGLVAYPLL).

The protein belongs to the chromate ion transporter (CHR) (TC 2.A.51) family.

It localises to the cell inner membrane. This protein reduces chromate accumulation and is essential for chromate resistance. The chain is Chromate transport protein from Cupriavidus metallidurans (strain ATCC 43123 / DSM 2839 / NBRC 102507 / CH34) (Ralstonia metallidurans).